The sequence spans 631 residues: Golgin subfamily A member 8A (631 aa).

Basic and acidic residues predominate over residues 1-20 (MLPVDGEERKSEGSDTEGDR). Disordered stretches follow at residues 1–103 (MLPV…QEQA), 127–154 (KKQV…LEGQ), 426–447 (TSAE…ESSG), and 488–520 (PGDS…GAAG). Over residues 78-92 (SLYLSPKSSSASSSL) the composition is skewed to low complexity. The span at 93-103 (HARQSPCQEQA) shows a compositional bias: polar residues. A coiled-coil region spans residues 110-468 (SIKISRLNDT…REHVEKLELG (359 aa)). Positions 128–152 (KQVEHQLEEEKKANNEKQKAERELE) are enriched in basic and acidic residues. Gly residues predominate over residues 497-510 (PGGGHHQAGPGQGG). The golgi-targeting domain stretch occupies residues 519–631 (AGDGVAACGS…CWAWLPRRRR (113 aa)).

This sequence belongs to the GOLGA8 family.

It localises to the golgi apparatus. The protein localises to the golgi stack membrane. In terms of biological role, may be involved in maintaining Golgi structure. This Homo sapiens (Human) protein is Golgin subfamily A member 8A (GOLGA8A).